We begin with the raw amino-acid sequence, 480 residues long: ATP synthase subunit beta 1 (480 aa).

154–161 (GGAGVGKT) is an ATP binding site.

It belongs to the ATPase alpha/beta chains family. As to quaternary structure, F-type ATPases have 2 components, CF(1) - the catalytic core - and CF(0) - the membrane proton channel. CF(1) has five subunits: alpha(3), beta(3), gamma(1), delta(1), epsilon(1). CF(0) has four main subunits: a(1), b(1), b'(1) and c(9-12).

Its subcellular location is the cell inner membrane. It catalyses the reaction ATP + H2O + 4 H(+)(in) = ADP + phosphate + 5 H(+)(out). Produces ATP from ADP in the presence of a proton gradient across the membrane. The catalytic sites are hosted primarily by the beta subunits. The sequence is that of ATP synthase subunit beta 1 from Bradyrhizobium sp. (strain BTAi1 / ATCC BAA-1182).